The sequence spans 202 residues: Dephospho-CoA kinase (202 aa).

The DPCK domain occupies 6–202 (KISVTGDPSS…QCFKALKGTI (197 aa)). 14 to 19 (SSGKTE) contacts ATP.

It belongs to the CoaE family.

Its subcellular location is the cytoplasm. The enzyme catalyses 3'-dephospho-CoA + ATP = ADP + CoA + H(+). The protein operates within cofactor biosynthesis; coenzyme A biosynthesis; CoA from (R)-pantothenate: step 5/5. Functionally, catalyzes the phosphorylation of the 3'-hydroxyl group of dephosphocoenzyme A to form coenzyme A. In Chlamydia muridarum (strain MoPn / Nigg), this protein is Dephospho-CoA kinase.